Reading from the N-terminus, the 706-residue chain is Histone deacetylase HDA1 (706 aa).

The segment covering 1–24 (MDSVMVKKEVLENPDHDLKRKLEE) has biased composition (basic and acidic residues). The interval 1–36 (MDSVMVKKEVLENPDHDLKRKLEENKEEENSLSTTS) is disordered. Positions 67 to 396 (RYHAKIFTSY…ALSVAKVLIG (330 aa)) are histone deacetylase. His206 is an active-site residue.

The protein belongs to the histone deacetylase family. HD type 2 subfamily.

It is found in the nucleus. It catalyses the reaction N(6)-acetyl-L-lysyl-[histone] + H2O = L-lysyl-[histone] + acetate. Responsible for the deacetylation of lysine residues on the N-terminal part of the core histones (H2A, H2B, H3 and H4). Histone deacetylation gives a tag for epigenetic repression and plays an important role in transcriptional regulation, cell cycle progression and developmental events. Histone deacetylases act via the formation of large multiprotein complexes. This Saccharomyces cerevisiae (strain ATCC 204508 / S288c) (Baker's yeast) protein is Histone deacetylase HDA1 (HDA1).